We begin with the raw amino-acid sequence, 487 residues long: MTTVEEDLLLNEPVATEYDGLTAIDEDFLLGAGDVSRKGTQESTDDLLGSSEPFDQEDILDTVPEQTDENEDEAGDDELESEKEELDYDEEEDDEDRRERTSRYTSEKKGSRKDSVEGDENKKENGQDETKRSGIPSLFDKTITNNPMKSGDQPIGVILRIEGEAERVFYPPPSFMEPKLNIVPRLPNGIPLIGVPSSHGRAGFGANYQDQARMAAGGGMAGMPMGWENQVNAFLNNTTKSKSRGRDTRKRRSSSYSSTSSSSDGRSRSRSSSRSDRRRRDDRKRPREDRDRKDYRRDGRRDGRRDDRKRHDDRRRDSYHRDSDKDIKRRKEQSKHSAMESAKALGLSNDYIDQVNEQKRKREEIVRKKEERRHAPVSEKKEVPTTVSTNTSSAAYANSKDKTKAYLAVNVTGVQQLPTAVKKIEAIASELGPIKKCWRSDEDVVSIIFNAHDKAKDFMLKHNGKVLSGLRITVSLEKKFLNLNDVN.

Disordered stretches follow at residues 35-153 (VSRK…SGDQ), 237-345 (NTTK…AKAL), and 358-395 (QKRKREEIVRKKEERRHAPVSEKKEVPTTVSTNTSSAA). A compositionally biased stretch (acidic residues) spans 54 to 96 (FDQEDILDTVPEQTDENEDEAGDDELESEKEELDYDEEEDDED). Residues 97–132 (RRERTSRYTSEKKGSRKDSVEGDENKKENGQDETKR) are compositionally biased toward basic and acidic residues. Residues 241 to 253 (SKSRGRDTRKRRS) show a composition bias toward basic residues. Low complexity predominate over residues 254–264 (SSYSSTSSSSD). 2 stretches are compositionally biased toward basic and acidic residues: residues 273–338 (SRSD…KHSA) and 358–383 (QKRKREEIVRKKEERRHAPVSEKKEV). Low complexity predominate over residues 385 to 395 (TTVSTNTSSAA).

This is an uncharacterized protein from Caenorhabditis elegans.